Consider the following 210-residue polypeptide: uncharacterized protein (210 aa).

Low complexity predominate over residues 101–114; it reads QELPEPSSPQSQSS. Residues 101 to 166 form a disordered region; the sequence is QELPEPSSPQ…SSGVSSDLQK (66 aa). Residues 147–164 are compositionally biased toward polar residues; that stretch reads RSTSPVTASTSSGVSSDL.

This is an uncharacterized protein from Alcelaphine herpesvirus 1 (strain C500) (AlHV-1).